The following is a 683-amino-acid chain: UvrABC system protein B (683 aa).

The disordered stretch occupies residues 1–29 (MTDTGPLQPDRPDLDRPLSVDAPFEPAGD). The Helicase ATP-binding domain maps to 39-417 (AGFESGAEKQ…PGDYERDHSE (379 aa)). 52-59 (GVTGSGKT) lines the ATP pocket. Residues 105–128 (YYDYYQPEAYVEQTDTYIDKDMSI) carry the Beta-hairpin motif. The Helicase C-terminal domain occupies 442–604 (QVEDLIERIQ…EPRTIEKPVS (163 aa)). Over residues 587–603 (EFNAEHGHEPRTIEKPV) the composition is skewed to basic and acidic residues. The segment at 587-620 (EFNAEHGHEPRTIEKPVSETNLPGSSTDTDGVAD) is disordered. Over residues 604–615 (SETNLPGSSTDT) the composition is skewed to polar residues. Positions 630-665 (EQLIERLETRMQEAADNLEFELAADIRDRIRELRET) constitute a UVR domain.

Belongs to the UvrB family. Forms a heterotetramer with UvrA during the search for lesions. Interacts with UvrC in an incision complex.

The protein resides in the cytoplasm. The UvrABC repair system catalyzes the recognition and processing of DNA lesions. A damage recognition complex composed of 2 UvrA and 2 UvrB subunits scans DNA for abnormalities. Upon binding of the UvrA(2)B(2) complex to a putative damaged site, the DNA wraps around one UvrB monomer. DNA wrap is dependent on ATP binding by UvrB and probably causes local melting of the DNA helix, facilitating insertion of UvrB beta-hairpin between the DNA strands. Then UvrB probes one DNA strand for the presence of a lesion. If a lesion is found the UvrA subunits dissociate and the UvrB-DNA preincision complex is formed. This complex is subsequently bound by UvrC and the second UvrB is released. If no lesion is found, the DNA wraps around the other UvrB subunit that will check the other stand for damage. The protein is UvrABC system protein B of Natronomonas pharaonis (strain ATCC 35678 / DSM 2160 / CIP 103997 / JCM 8858 / NBRC 14720 / NCIMB 2260 / Gabara) (Halobacterium pharaonis).